A 1182-amino-acid polypeptide reads, in one-letter code: MEAMSPQQDALGAQPGRSSSLTGMSRIAGGPGTKKKMKTLAERRRSAPSLILDKALQKRPSTRDSHSASIDTCAFLSSFMCSSRTLLIDGPVELKRGLQRQERHLFLFNDLFVSAKIKYNNNFKIKNKIRLTDMWTASCVEEVGEGNMNAQKSFVLGWPTVNFVATFSSPEQKDKWLSLLQRYIALEKEKDYPKSIPLKIFAKDIGNCAYFKTITVMNSDTASEVINMSLQMLGITGSERDYQLWVNSGKEAAPYPLIGHEYPYGIKMSHLRDTALLTQGSRDSASPSQLQEPFLMEQLPREMQCQFILKPTRLATAQQLSDSSQKTFKRRRSIINWAFWRGSSTHLDNLPMSPTSPMPGQLFGVSLPDLCENDNLPKPILDMLSFLNQKGPLTKGIFRQSANMKSCRELKEKLNSGIEVHLDCESIFVIASVLKDFLRNIPESIFSSDLYDHWVCVMDQGNDEEKINIIQRLLDQLPRANVVFLRYLFGVLHNIEQHSLSNQMTAFNLAVCIAPSILWPPASSSPELENEFTKKVSLLIQFLIENCCRVFGEEIASLLGELSERSDREHTPDITCFQMNDSSYDSLENELNEEADAPCSDLVKKLGQGSRSMDSVLTLSDYDLEQPEVEGLLTLSNFDLDQSKEEHIPIKPPLEPKPVNVFVGYRKVSLGEHARAPAGPGTLSCLPVAAADAPKVLRRHRRSSEPSIDYLDTKLSYLREFYQKKLRKSSCDAVLSRKDEDYLKQTQPQKKGDKVCLKQSSVTGTDVSKRNTANENIKKKSLSGHEGTQVTLFTKSKPVPISVASYSHGSSQDHPRKQAFDADPCRFSPPHLTDAQKSSRVQHRRCSEPSIDDQNYKLSYLRGIYSMKQNKASCEAGLLHGEDDYLRRHKSLQIEGQKLINQSLVMGIEVGKSSSSHQSTEKVLPPRLNLCPRASYSSLSSPGSSPSGSSVSSQDSAFSQISEHSVFTPTETSSPIDCTFQTQRKQEELSSDFDSPSRLSGMPGPSMGQASSHLAYLRKGTTEQPSQMHSVTLHPSAWLRSGLVTLKNWSLKKKTKAARPEDRKVCSLKEPLELPSCASGTPEADSLQESQDDLQGDEGPGQTACGFSSYACQDSEQHAGSPFHLAESRLKPCMKLYKGEESGGQYPCDNPWEGASSSLETTEDTANPGAEPTTFAMTGTDI.

Residues 1 to 40 are disordered; that stretch reads MEAMSPQQDALGAQPGRSSSLTGMSRIAGGPGTKKKMKTL. Ser-46 carries the post-translational modification Phosphoserine. One can recognise a PH domain in the interval 85–185; sequence TLLIDGPVEL…WLSLLQRYIA (101 aa). A Ras-associating domain is found at 194–283; that stretch reads KSIPLKIFAK…TALLTQGSRD (90 aa). Residues 365–551 enclose the Rho-GAP domain; that stretch reads VSLPDLCEND…FLIENCCRVF (187 aa). Phosphoserine is present on residues Ser-704 and Ser-730. 6 disordered regions span residues 745-772, 803-839, 935-955, 982-1011, 1074-1101, and 1142-1182; these read QTQP…KRNT, VASY…QKSS, SYSS…SSQD, TQRK…GQAS, LPSC…EGPG, and SGGQ…GTDI. The span at 758 to 772 shows a compositional bias: polar residues; the sequence is KQSSVTGTDVSKRNT. A compositionally biased stretch (basic and acidic residues) spans 811–824; the sequence is SQDHPRKQAFDADP.

GTPase activator for the Rho-type GTPases by converting them to an inactive GDP-bound state. This Mus musculus (Mouse) protein is Rho GTPase-activating protein 20 (Arhgap20).